The chain runs to 182 residues: MKGWGWLALLLGALLGTAWARRSQDLHCGACRALVDELEWEIAQVDPKKTIQMGSFRINPDGSQSVVEVPYARSEAHLTELLEEICDRMKEYGEQIDPSTHRKNYVRVVGRNGESSELDLQGIRIDSDISGTLKFACESIVEEYEDELIEFFSREADNVKDKLCSKRTDLCDHALHISHDEL.

The signal sequence occupies residues 1-20 (MKGWGWLALLLGALLGTAWA). One can recognise a Saposin B-type domain in the interval 24-175 (QDLHCGACRA…KRTDLCDHAL (152 aa)). Disulfide bonds link cysteine 28/cysteine 171, cysteine 31/cysteine 164, and cysteine 86/cysteine 137. Phosphoserine is present on serine 115. The short motif at 179–182 (HDEL) is the Prevents secretion from ER element.

The protein belongs to the canopy family. Interacts with MYLIP/MIR. As to expression, expressed in different tissues. Highest levels are detected in adult placenta, liver and pancreas.

The protein resides in the endoplasmic reticulum. In terms of biological role, positive regulator of neurite outgrowth by stabilizing myosin regulatory light chain (MRLC). It prevents MIR-mediated MRLC ubiquitination and its subsequent proteasomal degradation. The chain is Protein canopy homolog 2 (CNPY2) from Homo sapiens (Human).